The primary structure comprises 468 residues: MLRTPLLHEQDCIIGMATPPGTSGVAVLRLSGPGVLSLVVPYLYTPKGEKVAESGFKPRVMRRLNFIDPQAPDVPLDHMLVVHFPNPHSFSGEDMVELHGHGAPVVVKRIMEVLVAHGVRPADPGEFSKRAFFNNKMDLVQAEALMGLIEATSLRAAREASRQMTGTLSEHLMALKDHLVLTYAHLEAALDFSDEDIEPESEGGLLDRLAYVHAGIKKMLGTAELGRQMRDGFELAIVGRPNVGKSSLFNALSGEDRAIVTDLAGTTRDLNESNLEIHGLPILLVDTAGLRESDDPVERIGIERAWQRVERADGIVFVAEAQLGVTLEDKALLQRLPKEKALWVWNKLDQLEGALPECLQDWPEEQICGVSCHTGEGLESVVAHIVARMEQLPEHGEGVVIMQLRQQQTLQQAIVLIEEAQEMLANGQWLELVAEPLTRSIDQLTQLMGNTDYEDVLGMVFSSFCVGK.

Residues arginine 29, glutamate 97, and lysine 136 each contribute to the (6S)-5-formyl-5,6,7,8-tetrahydrofolate site. In terms of domain architecture, TrmE-type G spans 232–390; the sequence is GFELAIVGRP…VVAHIVARME (159 aa). Asparagine 242 lines the K(+) pocket. GTP-binding positions include 242–247, 261–267, and 286–289; these read NVGKSS, TDLAGTT, and DTAG. Serine 246 provides a ligand contact to Mg(2+). 3 residues coordinate K(+): threonine 261, leucine 263, and threonine 266. A Mg(2+)-binding site is contributed by threonine 267. Lysine 468 lines the (6S)-5-formyl-5,6,7,8-tetrahydrofolate pocket.

Belongs to the TRAFAC class TrmE-Era-EngA-EngB-Septin-like GTPase superfamily. TrmE GTPase family. As to quaternary structure, homodimer. Heterotetramer of two MnmE and two MnmG subunits. The cofactor is K(+).

It is found in the cytoplasm. Exhibits a very high intrinsic GTPase hydrolysis rate. Involved in the addition of a carboxymethylaminomethyl (cmnm) group at the wobble position (U34) of certain tRNAs, forming tRNA-cmnm(5)s(2)U34. The polypeptide is tRNA modification GTPase MnmE (Magnetococcus marinus (strain ATCC BAA-1437 / JCM 17883 / MC-1)).